The following is a 533-amino-acid chain: Homeobox protein DTH-1 (533 aa).

2 disordered regions span residues Met1–Pro28 and Leu308–Arg378. Basic and acidic residues predominate over residues Val8–Tyr19. Residues Leu308–Gln317 show a composition bias toward low complexity. The span at Thr318 to Ile333 shows a compositional bias: polar residues. Low complexity predominate over residues Ser360–Ser371. A DNA-binding region (homeobox) is located at residues Lys377–His436.

Belongs to the NK-2 homeobox family. Intestine and unidentified peripheral parenchymal cells. Slightly higher levels in the cephalic region compared to other body regions.

Its subcellular location is the nucleus. This protein might be involved in determination and/or differentiation of nerve cells in the continuous replacement of neurons in the cephalic region. In Girardia tigrina (Planarian), this protein is Homeobox protein DTH-1 (DTH-1).